Reading from the N-terminus, the 244-residue chain is Type III pantothenate kinase (244 aa).

7–14 is a binding site for ATP; that stretch reads DIGNTRLK. Substrate contacts are provided by residues Y95 and 102-105; that span reads GIDR. The active-site Proton acceptor is the D104. ATP is bound at residue T126. T177 serves as a coordination point for substrate.

This sequence belongs to the type III pantothenate kinase family. As to quaternary structure, homodimer. NH4(+) serves as cofactor. K(+) is required as a cofactor.

Its subcellular location is the cytoplasm. It catalyses the reaction (R)-pantothenate + ATP = (R)-4'-phosphopantothenate + ADP + H(+). It participates in cofactor biosynthesis; coenzyme A biosynthesis; CoA from (R)-pantothenate: step 1/5. Functionally, catalyzes the phosphorylation of pantothenate (Pan), the first step in CoA biosynthesis. In Acinetobacter baumannii (strain ACICU), this protein is Type III pantothenate kinase.